Here is a 416-residue protein sequence, read N- to C-terminus: Chorismate synthase (416 aa).

Positions 40 and 46 each coordinate NADP(+). FMN contacts are provided by residues 135-137 (RAS), 256-257 (QA), glycine 300, 315-319 (KPIAT), and arginine 341.

Belongs to the chorismate synthase family. As to quaternary structure, homotetramer. Requires FMNH2 as cofactor.

The enzyme catalyses 5-O-(1-carboxyvinyl)-3-phosphoshikimate = chorismate + phosphate. The protein operates within metabolic intermediate biosynthesis; chorismate biosynthesis; chorismate from D-erythrose 4-phosphate and phosphoenolpyruvate: step 7/7. In terms of biological role, catalyzes the anti-1,4-elimination of the C-3 phosphate and the C-6 proR hydrogen from 5-enolpyruvylshikimate-3-phosphate (EPSP) to yield chorismate, which is the branch point compound that serves as the starting substrate for the three terminal pathways of aromatic amino acid biosynthesis. This reaction introduces a second double bond into the aromatic ring system. This is Chorismate synthase from Kocuria rhizophila (strain ATCC 9341 / DSM 348 / NBRC 103217 / DC2201).